Reading from the N-terminus, the 101-residue chain is Large ribosomal subunit protein uL24c (101 aa).

It belongs to the universal ribosomal protein uL24 family. As to quaternary structure, part of the 50S ribosomal subunit.

Its subcellular location is the plastid. It is found in the chloroplast. One of two assembly initiator proteins, it binds directly to the 5'-end of the 23S rRNA, where it nucleates assembly of the 50S subunit. This Guillardia theta (Cryptophyte) protein is Large ribosomal subunit protein uL24c (rpl24).